Reading from the N-terminus, the 261-residue chain is Cytochrome c oxidase subunit 3 (261 aa).

Topologically, residues 1-15 (MAHQSHAYHMVKPSP) are mitochondrial matrix. Residues 16–34 (WPLTGALSALLTTSGLTMW) traverse the membrane as a helical segment. At 35–40 (FHFHST) the chain is on the mitochondrial intermembrane side. Residues 41–66 (TLLLTGLLTNALTMYQWWRDVVREST) traverse the membrane as a helical segment. Residues 67–72 (YQGHHT) are Mitochondrial matrix-facing. Residues 73 to 105 (LPVQKGLRYGMILFITSEVFFFAGFFWAFYHSS) traverse the membrane as a helical segment. The Mitochondrial intermembrane portion of the chain corresponds to 106-128 (LAPTPQLGGHWPPTGIIPLNPLE). The helical transmembrane segment at 129–152 (VPLLNTSVLLASGVSITWAHHSLM) threads the bilayer. Residues 153-155 (ENN) are Mitochondrial matrix-facing. Residues 156–183 (RTQMIQALLITILLGIYFTLLQASEYIE) traverse the membrane as a helical segment. Residues 184–190 (APFTISD) lie on the Mitochondrial intermembrane side of the membrane. Residues 191–223 (GIYGSTFFMATGFHGLHVIIGSTFLTVCLARQL) traverse the membrane as a helical segment. Topologically, residues 224 to 232 (LFHFTSKHH) are mitochondrial matrix. The helical transmembrane segment at 233–256 (FGFEAAAWYWHFVDVVWLFLYVSI) threads the bilayer. Over 257–261 (YWWGS) the chain is Mitochondrial intermembrane.

The protein belongs to the cytochrome c oxidase subunit 3 family. As to quaternary structure, component of the cytochrome c oxidase (complex IV, CIV), a multisubunit enzyme composed of 14 subunits. The complex is composed of a catalytic core of 3 subunits MT-CO1, MT-CO2 and MT-CO3, encoded in the mitochondrial DNA, and 11 supernumerary subunits COX4I, COX5A, COX5B, COX6A, COX6B, COX6C, COX7A, COX7B, COX7C, COX8 and NDUFA4, which are encoded in the nuclear genome. The complex exists as a monomer or a dimer and forms supercomplexes (SCs) in the inner mitochondrial membrane with NADH-ubiquinone oxidoreductase (complex I, CI) and ubiquinol-cytochrome c oxidoreductase (cytochrome b-c1 complex, complex III, CIII), resulting in different assemblies (supercomplex SCI(1)III(2)IV(1) and megacomplex MCI(2)III(2)IV(2)).

The protein localises to the mitochondrion inner membrane. It catalyses the reaction 4 Fe(II)-[cytochrome c] + O2 + 8 H(+)(in) = 4 Fe(III)-[cytochrome c] + 2 H2O + 4 H(+)(out). Its function is as follows. Component of the cytochrome c oxidase, the last enzyme in the mitochondrial electron transport chain which drives oxidative phosphorylation. The respiratory chain contains 3 multisubunit complexes succinate dehydrogenase (complex II, CII), ubiquinol-cytochrome c oxidoreductase (cytochrome b-c1 complex, complex III, CIII) and cytochrome c oxidase (complex IV, CIV), that cooperate to transfer electrons derived from NADH and succinate to molecular oxygen, creating an electrochemical gradient over the inner membrane that drives transmembrane transport and the ATP synthase. Cytochrome c oxidase is the component of the respiratory chain that catalyzes the reduction of oxygen to water. Electrons originating from reduced cytochrome c in the intermembrane space (IMS) are transferred via the dinuclear copper A center (CU(A)) of subunit 2 and heme A of subunit 1 to the active site in subunit 1, a binuclear center (BNC) formed by heme A3 and copper B (CU(B)). The BNC reduces molecular oxygen to 2 water molecules using 4 electrons from cytochrome c in the IMS and 4 protons from the mitochondrial matrix. The sequence is that of Cytochrome c oxidase subunit 3 (MT-CO3) from Pongo abelii (Sumatran orangutan).